Reading from the N-terminus, the 97-residue chain is Large ribosomal subunit protein bL28 (97 aa).

This sequence belongs to the bacterial ribosomal protein bL28 family.

This Nitrobacter winogradskyi (strain ATCC 25391 / DSM 10237 / CIP 104748 / NCIMB 11846 / Nb-255) protein is Large ribosomal subunit protein bL28.